Consider the following 507-residue polypeptide: ATP synthase subunit alpha, mitochondrial (507 aa).

171 to 178 (GDRQTGKT) contacts ATP.

Belongs to the ATPase alpha/beta chains family. In terms of assembly, F-type ATPases have 2 components, CF(1) - the catalytic core - and CF(0) - the membrane proton channel. CF(1) has five subunits: alpha(3), beta(3), gamma(1), delta(1), epsilon(1). CF(0) has three main subunits: a, b and c.

The protein localises to the mitochondrion. The protein resides in the mitochondrion inner membrane. Functionally, mitochondrial membrane ATP synthase (F(1)F(0) ATP synthase or Complex V) produces ATP from ADP in the presence of a proton gradient across the membrane which is generated by electron transport complexes of the respiratory chain. F-type ATPases consist of two structural domains, F(1) - containing the extramembraneous catalytic core, and F(0) - containing the membrane proton channel, linked together by a central stalk and a peripheral stalk. During catalysis, ATP synthesis in the catalytic domain of F(1) is coupled via a rotary mechanism of the central stalk subunits to proton translocation. Subunits alpha and beta form the catalytic core in F(1). Rotation of the central stalk against the surrounding alpha(3)beta(3) subunits leads to hydrolysis of ATP in three separate catalytic sites on the beta subunits. Subunit alpha does not bear the catalytic high-affinity ATP-binding sites. This chain is ATP synthase subunit alpha, mitochondrial (ATPA), found in Arabidopsis thaliana (Mouse-ear cress).